The primary structure comprises 262 residues: Malonyl-[acyl-carrier protein] O-methyltransferase (262 aa).

This sequence belongs to the methyltransferase superfamily.

The enzyme catalyses malonyl-[ACP] + S-adenosyl-L-methionine = malonyl-[ACP] methyl ester + S-adenosyl-L-homocysteine. The protein operates within cofactor biosynthesis; biotin biosynthesis. In terms of biological role, converts the free carboxyl group of a malonyl-thioester to its methyl ester by transfer of a methyl group from S-adenosyl-L-methionine (SAM). It allows to synthesize pimeloyl-ACP via the fatty acid synthetic pathway. The chain is Malonyl-[acyl-carrier protein] O-methyltransferase from Erwinia pyrifoliae (strain DSM 12163 / CIP 106111 / Ep16/96).